An 875-amino-acid chain; its full sequence is Importin subunit beta-1 (875 aa).

An N-acetylmethionine modification is found at methionine 1. HEAT repeat units follow at residues 2 to 31, 33 to 64, 84 to 122, 128 to 159, and 169 to 201; these read ELITILEKTVSPDRLELEAAQKFLERAAVE, LPTFLVELSRVLANPGNSQVARVAAGLQIRLL, ANARREVKNYVLQTLGTETYRPSSASQCVAGIACAEIPV, LIPQLVANVTNPNSTEHMKESTLEAIGYICQD, and SNEILTAIIQGMRKEEPSNNVKLAATNALLNSL. Serine 12 carries the phosphoserine modification. Positions 21-100 constitute an Importin N-terminal domain; sequence AQKFLERAAV…KNYVLQTLGT (80 aa). An N6-acetyllysine modification is found at lysine 210. 14 HEAT repeats span residues 211-246, 252-301, 313-359, 363-393, 401-437, 448-484, 499-536, 543-591, 599-638, 643-680, 685-723, 731-775, 785-828, and 830-872; these read ESERHFIMQVVCEATQCPDTRVRVAALQNLVKIMSL, ETYM…EAAE, YAKG…TCCE, VPHVLPFIKEHIKNPDWRYRDAAVMAFGSIL, LKPLVIQAMPTLIELMKDPSVVVRDTTAWTVGRICEL, LAPLLQCLIEGLSAEPRVASNVCWAFSSLAEAAYEAA, SSSFELIVQKLLETTDRPDGHQNNLRSSAYESLMEIVK, YPAV…QNVL, ALQISDVVMASLLRMFQSTAGSGGVQEDALMAVSTLVEVL, LKYMEAFKPFLGIGLKNYAECQVCLAAVGLVGDLCRAL, LPFCDEVMQLLLENLGNENVHRSVKPQILSVFGDITLAI, LEVV…VQGL, DVML…CTAF, and KDVL…RKLK. The segment at 285–461 is essential for high affinity interaction with RPL23A; that stretch reads VCDEEMDLAI…LQCLIEGLSA (177 aa). The segment at 328 to 341 is IAB-binding; that stretch reads TLTKQDENDDDDDW. The ran-GTP binding stretch occupies residues 333 to 418; the sequence is DENDDDDDWN…MPTLIELMKD (86 aa). 2 positions are modified to N6-acetyllysine: lysine 834 and lysine 866.

This sequence belongs to the importin beta family. Importin beta-1 subfamily. In terms of assembly, forms a complex with an importin alpha subunit. Interacts with XPO1. Forms a heterodimer with IPO7. The KPNB1/IPO7 heterodimer interacts with H1 histone. Interacts with SNUPN. Interacts with H2A, H2B, H3 and H4 histones. Component of an import snRNP complex composed of KPNB1, SNUPN, SMN1 and ZNF259. Component of a nuclear export receptor complex composed of KPNB1, Ran, SNUPN and XPO1. Interacts with SRY. Interacts with PRKCI/atypical protein kinase C iota. Interacts with KPNA2. Interacts with KPNA7. Interacts with SNAI1 (via zinc fingers) and SNAI2 (via zinc fingers). Interacts with SLC35G1 and STIM1. Interacts with DCAF8. Interacts with RAN. Interacts with NUMA1 (via C-terminus); this interaction is inhibited by RanGTP. Interacts with ZBED1/hDREF; required for nuclear import of ZBED1/hDREF. Interacts with SRP19. Interacts with RPL23A (via BIB domain), RPS7 and RPL5. Mono-ADP-ribosylated by PARP16.

It localises to the cytoplasm. The protein localises to the nucleus envelope. In terms of biological role, functions in nuclear protein import, either in association with an adapter protein, like an importin-alpha subunit, which binds to nuclear localization signals (NLS) in cargo substrates, or by acting as autonomous nuclear transport receptor. Acting autonomously, serves itself as NLS receptor. Docking of the importin/substrate complex to the nuclear pore complex (NPC) is mediated by KPNB1 through binding to nucleoporin FxFG repeats and the complex is subsequently translocated through the pore by an energy requiring, Ran-dependent mechanism. At the nucleoplasmic side of the NPC, Ran binds to importin-beta and the three components separate and importin-alpha and -beta are re-exported from the nucleus to the cytoplasm where GTP hydrolysis releases Ran from importin. The directionality of nuclear import is thought to be conferred by an asymmetric distribution of the GTP- and GDP-bound forms of Ran between the cytoplasm and nucleus. Mediates autonomously the nuclear import of ribosomal proteins RPL23A, RPS7 and RPL5. In association with IPO7, mediates the nuclear import of H1 histone. In vitro, mediates nuclear import of H2A, H2B, H3 and H4 histones. Imports MRTFA, SNAI1 and PRKCI into the nucleus. The chain is Importin subunit beta-1 (Kpnb1) from Rattus norvegicus (Rat).